A 1406-amino-acid polypeptide reads, in one-letter code: DNA-directed RNA polymerase subunit beta' (1406 aa).

Zn(2+)-binding residues include cysteine 70, cysteine 72, cysteine 85, and cysteine 88. Positions 460, 462, and 464 each coordinate Mg(2+). Zn(2+)-binding residues include cysteine 814, cysteine 888, cysteine 895, and cysteine 898.

Belongs to the RNA polymerase beta' chain family. As to quaternary structure, the RNAP catalytic core consists of 2 alpha, 1 beta, 1 beta' and 1 omega subunit. When a sigma factor is associated with the core the holoenzyme is formed, which can initiate transcription. Requires Mg(2+) as cofactor. The cofactor is Zn(2+).

The enzyme catalyses RNA(n) + a ribonucleoside 5'-triphosphate = RNA(n+1) + diphosphate. In terms of biological role, DNA-dependent RNA polymerase catalyzes the transcription of DNA into RNA using the four ribonucleoside triphosphates as substrates. In Yersinia enterocolitica serotype O:8 / biotype 1B (strain NCTC 13174 / 8081), this protein is DNA-directed RNA polymerase subunit beta'.